The sequence spans 798 residues: Transferrin receptor protein 2 (798 aa).

The Cytoplasmic segment spans residues 1–81 (MEQRWGLLRR…WAAAGRKAAP (81 aa)). Positions 23-26 (YRRV) match the Endocytosis signal motif. A helical; Signal-anchor for type II membrane protein transmembrane segment spans residues 82 to 102 (YLVLITLLIFTGAFLLGYVAF). Residues 103–798 (RGSCQACGDS…GDVWNIDNNF (696 aa)) are Extracellular-facing. Residues asparagine 235, asparagine 334, and asparagine 535 are each glycosylated (N-linked (GlcNAc...) asparagine).

It belongs to the peptidase M28 family. M28B subfamily. In terms of tissue distribution, predominantly expressed in liver. Also expressed in kidney, spleen, brain, lung, heart and muscle with very low expression in kidney, muscle and heart.

The protein localises to the cell membrane. The protein resides in the cytoplasm. Mediates cellular uptake of transferrin-bound iron in a non-iron dependent manner. May be involved in iron metabolism, hepatocyte function and erythrocyte differentiation. The polypeptide is Transferrin receptor protein 2 (Tfr2) (Mus musculus (Mouse)).